A 260-amino-acid chain; its full sequence is uncharacterized protein (260 aa).

Residues 8-166 enclose the PNPLA domain; sequence LALGSGGARG…VDRIPVSVVK (159 aa). A GXSXG motif is present at residues 39–43; that stretch reads GSSMG. Ser-41 (nucleophile) is an active-site residue. Asp-153 functions as the Proton acceptor in the catalytic mechanism. Residues 153–155 carry the DGA/G motif; it reads DGA.

It belongs to the NTE family.

This is an uncharacterized protein from Bacillus subtilis (strain 168).